Reading from the N-terminus, the 536-residue chain is Glutamate--tRNA ligase, mitochondrial (536 aa).

Residue 48-50 (RFA) participates in L-glutamate binding. A 'HIGH' region motif is present at residues 53-61 (PTGFLHLGS). H58 lines the ATP pocket. L-glutamate-binding positions include E84, 235 to 239 (YHLAN), and R253. Residues E256 and 291 to 295 (KLSKR) contribute to the ATP site. The short motif at 291 to 295 (KLSKR) is the 'KMSKS' region element.

The protein belongs to the class-I aminoacyl-tRNA synthetase family. Glutamate--tRNA ligase type 1 subfamily.

The protein localises to the mitochondrion matrix. It catalyses the reaction tRNA(Glu) + L-glutamate + ATP = L-glutamyl-tRNA(Glu) + AMP + diphosphate. In terms of biological role, catalyzes the attachment of glutamate to tRNA(Glu) in a two-step reaction: glutamate is first activated by ATP to form Glu-AMP and then transferred to the acceptor end of tRNA(Glu). The chain is Glutamate--tRNA ligase, mitochondrial (MSE1) from Saccharomyces cerevisiae (strain ATCC 204508 / S288c) (Baker's yeast).